The chain runs to 469 residues: Argininosuccinate lyase (469 aa).

This sequence belongs to the lyase 1 family. Argininosuccinate lyase subfamily.

The protein resides in the cytoplasm. The catalysed reaction is 2-(N(omega)-L-arginino)succinate = fumarate + L-arginine. The protein operates within amino-acid biosynthesis; L-arginine biosynthesis; L-arginine from L-ornithine and carbamoyl phosphate: step 3/3. This is Argininosuccinate lyase from Burkholderia cenocepacia (strain ATCC BAA-245 / DSM 16553 / LMG 16656 / NCTC 13227 / J2315 / CF5610) (Burkholderia cepacia (strain J2315)).